The following is a 292-amino-acid chain: UPF0761 membrane protein Ping_3482 (292 aa).

6 consecutive transmembrane segments (helical) span residues 43–63 (LLSIVPLLAVIFYMLAAFPVF), 100–120 (MSMMGIGSLIAIALLLISTID), 139–159 (FTIYWTILSLGPVIIGASLAL), 179–199 (LLSLMPFILTWLTFAGVYTLV), 209–229 (ALIGGLIAAILFFFGTDLFRL), and 243–263 (ALAVIPILFVWIYYSWLIVLI).

This sequence belongs to the UPF0761 family.

The protein localises to the cell inner membrane. The chain is UPF0761 membrane protein Ping_3482 from Psychromonas ingrahamii (strain DSM 17664 / CCUG 51855 / 37).